The chain runs to 349 residues: tRNA pseudouridine synthase D (349 aa).

F27 contributes to the substrate binding site. D80 (nucleophile) is an active-site residue. Substrate is bound at residue N129. Residues 155–303 enclose the TRUD domain; sequence GVPNYFGAQR…VEAARRAMLL (149 aa). Residue F329 coordinates substrate.

This sequence belongs to the pseudouridine synthase TruD family.

It catalyses the reaction uridine(13) in tRNA = pseudouridine(13) in tRNA. Responsible for synthesis of pseudouridine from uracil-13 in transfer RNAs. This is tRNA pseudouridine synthase D from Shigella dysenteriae serotype 1 (strain Sd197).